The sequence spans 462 residues: tRNA modification GTPase MnmE (462 aa).

3 residues coordinate (6S)-5-formyl-5,6,7,8-tetrahydrofolate: R27, E89, and R128. Positions 223-383 (GLKIAIVGRP…LEAAILAAVG (161 aa)) constitute a TrmE-type G domain. N233 contacts K(+). GTP is bound by residues 233-238 (NVGKSS), 252-258 (TDLPGTT), and 277-280 (DTAG). Mg(2+) is bound at residue S237. Residues T252, L254, and T257 each coordinate K(+). A Mg(2+)-binding site is contributed by T258. K462 serves as a coordination point for (6S)-5-formyl-5,6,7,8-tetrahydrofolate.

Belongs to the TRAFAC class TrmE-Era-EngA-EngB-Septin-like GTPase superfamily. TrmE GTPase family. Homodimer. Heterotetramer of two MnmE and two MnmG subunits. The cofactor is K(+).

It localises to the cytoplasm. Its function is as follows. Exhibits a very high intrinsic GTPase hydrolysis rate. Involved in the addition of a carboxymethylaminomethyl (cmnm) group at the wobble position (U34) of certain tRNAs, forming tRNA-cmnm(5)s(2)U34. This Synechococcus elongatus (strain ATCC 33912 / PCC 7942 / FACHB-805) (Anacystis nidulans R2) protein is tRNA modification GTPase MnmE.